The chain runs to 785 residues: Tripartite terminase subunit 1 (785 aa).

A C3H1-type zinc finger spans residues 197–225; the sequence is CAVCFEELCVTANQGATIARRLADRICNH. Disordered regions lie at residues 433–452 and 457–489; these read GGAADAPKGGAGPDDDGDRV and GARGLGAPGGGGEDEDRRRGPGGQGPETWGDIA. 696–703 contacts ATP; that stretch reads FASVYRCG.

This sequence belongs to the herpesviridae TRM1 protein family. In terms of assembly, associates with TRM2 and TRM3 to form the tripartite terminase complex. Interacts with portal protein.

The protein localises to the host nucleus. Functionally, component of the molecular motor that translocates viral genomic DNA in empty capsid during DNA packaging. Forms a tripartite terminase complex together with TRM2 and TRM3 in the host cytoplasm. Once the complex reaches the host nucleus, it interacts with the capsid portal vertex. This portal forms a ring in which genomic DNA is translocated into the capsid. TRM1 carries an endonuclease activity that plays an important role for the cleavage of concatemeric viral DNA into unit length genomes. In Human herpesvirus 1 (strain 17) (HHV-1), this protein is Tripartite terminase subunit 1.